The sequence spans 278 residues: Protein FixR (278 aa).

Residue 40–64 coordinates NAD(+); sequence LLTGASRGIGHATAKLFSEAGWRII. Residue serine 175 participates in substrate binding. Catalysis depends on tyrosine 189, which acts as the Proton acceptor.

This sequence belongs to the short-chain dehydrogenases/reductases (SDR) family.

The chain is Protein FixR (fixR) from Bradyrhizobium diazoefficiens (strain JCM 10833 / BCRC 13528 / IAM 13628 / NBRC 14792 / USDA 110).